The primary structure comprises 177 residues: Ribosome maturation factor RimM (177 aa).

The PRC barrel domain maps to 104-177 (GVDGIWADLI…IIKVKLMEGM (74 aa)).

It belongs to the RimM family. As to quaternary structure, binds ribosomal protein uS19.

The protein resides in the cytoplasm. In terms of biological role, an accessory protein needed during the final step in the assembly of 30S ribosomal subunit, possibly for assembly of the head region. Essential for efficient processing of 16S rRNA. May be needed both before and after RbfA during the maturation of 16S rRNA. It has affinity for free ribosomal 30S subunits but not for 70S ribosomes. The polypeptide is Ribosome maturation factor RimM (Magnetococcus marinus (strain ATCC BAA-1437 / JCM 17883 / MC-1)).